A 321-amino-acid polypeptide reads, in one-letter code: GTP 3',8-cyclase (321 aa).

Residues 5–233 (SFNRVIDYIR…QGSSKIYTLE (229 aa)) form the Radical SAM core domain. GTP is bound at residue Arg-14. Positions 21 and 25 each coordinate [4Fe-4S] cluster. Tyr-27 is an S-adenosyl-L-methionine binding site. Cys-28 lines the [4Fe-4S] cluster pocket. Position 64 (Arg-64) interacts with GTP. Gly-68 lines the S-adenosyl-L-methionine pocket. Ser-95 serves as a coordination point for GTP. Residue Ser-119 coordinates S-adenosyl-L-methionine. Residue Lys-155 participates in GTP binding. Met-189 contacts S-adenosyl-L-methionine. Residues Cys-249 and Cys-252 each contribute to the [4Fe-4S] cluster site. 254-256 (RIR) lines the GTP pocket. Cys-266 serves as a coordination point for [4Fe-4S] cluster.

Belongs to the radical SAM superfamily. MoaA family. In terms of assembly, monomer and homodimer. It depends on [4Fe-4S] cluster as a cofactor.

It catalyses the reaction GTP + AH2 + S-adenosyl-L-methionine = (8S)-3',8-cyclo-7,8-dihydroguanosine 5'-triphosphate + 5'-deoxyadenosine + L-methionine + A + H(+). Its pathway is cofactor biosynthesis; molybdopterin biosynthesis. In terms of biological role, catalyzes the cyclization of GTP to (8S)-3',8-cyclo-7,8-dihydroguanosine 5'-triphosphate. The protein is GTP 3',8-cyclase of Helicobacter pylori (strain J99 / ATCC 700824) (Campylobacter pylori J99).